We begin with the raw amino-acid sequence, 416 residues long: Imidazolonepropionase (416 aa).

H78 and H80 together coordinate Fe(3+). 2 residues coordinate Zn(2+): H78 and H80. Residues R87, Y150, and H183 each coordinate 4-imidazolone-5-propanoate. Position 150 (Y150) interacts with N-formimidoyl-L-glutamate. A Fe(3+)-binding site is contributed by H248. Residue H248 participates in Zn(2+) binding. Q251 is a binding site for 4-imidazolone-5-propanoate. D323 provides a ligand contact to Fe(3+). D323 contributes to the Zn(2+) binding site. The N-formimidoyl-L-glutamate site is built by N325 and G327. T328 serves as a coordination point for 4-imidazolone-5-propanoate.

This sequence belongs to the metallo-dependent hydrolases superfamily. HutI family. It depends on Zn(2+) as a cofactor. Fe(3+) serves as cofactor.

It is found in the cytoplasm. It carries out the reaction 4-imidazolone-5-propanoate + H2O = N-formimidoyl-L-glutamate. It participates in amino-acid degradation; L-histidine degradation into L-glutamate; N-formimidoyl-L-glutamate from L-histidine: step 3/3. Its function is as follows. Catalyzes the hydrolytic cleavage of the carbon-nitrogen bond in imidazolone-5-propanoate to yield N-formimidoyl-L-glutamate. It is the third step in the universal histidine degradation pathway. This chain is Imidazolonepropionase, found in Vibrio parahaemolyticus serotype O3:K6 (strain RIMD 2210633).